Consider the following 274-residue polypeptide: Diaminopimelate epimerase (274 aa).

Residues N11, Q44, and N64 each coordinate substrate. The active-site Proton donor is the C73. Substrate contacts are provided by residues 74 to 75 (GN), N157, N190, and 208 to 209 (ER). Catalysis depends on C217, which acts as the Proton acceptor. Substrate is bound at residue 218-219 (GS).

Belongs to the diaminopimelate epimerase family. As to quaternary structure, homodimer.

It localises to the cytoplasm. The enzyme catalyses (2S,6S)-2,6-diaminopimelate = meso-2,6-diaminopimelate. It participates in amino-acid biosynthesis; L-lysine biosynthesis via DAP pathway; DL-2,6-diaminopimelate from LL-2,6-diaminopimelate: step 1/1. Functionally, catalyzes the stereoinversion of LL-2,6-diaminopimelate (L,L-DAP) to meso-diaminopimelate (meso-DAP), a precursor of L-lysine and an essential component of the bacterial peptidoglycan. In Photorhabdus laumondii subsp. laumondii (strain DSM 15139 / CIP 105565 / TT01) (Photorhabdus luminescens subsp. laumondii), this protein is Diaminopimelate epimerase.